The sequence spans 101 residues: Integration host factor subunit beta (101 aa).

The protein belongs to the bacterial histone-like protein family. In terms of assembly, heterodimer of an alpha and a beta chain.

In terms of biological role, this protein is one of the two subunits of integration host factor, a specific DNA-binding protein that functions in genetic recombination as well as in transcriptional and translational control. In Rhodopseudomonas palustris (strain BisB5), this protein is Integration host factor subunit beta.